The following is a 318-amino-acid chain: Putative enoyl-CoA hydratase EchA13 (318 aa).

Residues 90–110 (LGSADDIRERSPGPDQHPSYR) form a disordered region.

It belongs to the enoyl-CoA hydratase/isomerase family.

This is Putative enoyl-CoA hydratase EchA13 (echA13) from Mycobacterium tuberculosis (strain ATCC 25618 / H37Rv).